The chain runs to 344 residues: Gibberellin receptor GID1C (344 aa).

Ala2 carries the N-acetylalanine modification. The Involved in the stabilization of the negatively charged intermediate by the formation of the oxyanion hole signature appears at 111-113; sequence HGG. Gibberellin A4-binding positions include 113 to 114, Tyr125, and Ser189; that span reads GS. The gibberellin A3 site is built by Ser114, Tyr125, Ser189, and Phe236. Residue Ser189 is part of the active site. Residue Asp287 is part of the active site. Gly318 serves as a coordination point for gibberellin A4. Gly318 is a binding site for gibberellin A3.

It belongs to the 'GDXG' lipolytic enzyme family. Interacts with the DELLA proteins GAI, RGA, RGL1, RGL2 and RGL3 in a GA-dependent manner. As to expression, widely expressed.

It is found in the nucleus. Its function is as follows. Functions as a soluble gibberellin (GA) receptor. GA is an essential hormone that regulates growth and development in plants. Binds with high affinity the biologically active gibberellin GA4, but has no affinity for the biologically inactive GAs. In response to GA, interacts with specific DELLA proteins, known as repressors of GA-induced growth, and targets them for degradation via proteasome. Seems to be required for GA signaling that controls root growth, seed germination and stem elongation. Partially redundant with GID1A and GID1B. The chain is Gibberellin receptor GID1C (GID1C) from Arabidopsis thaliana (Mouse-ear cress).